We begin with the raw amino-acid sequence, 375 residues long: Alcohol dehydrogenase 1C (375 aa).

Ser-2 is modified (N-acetylserine). Residue Ser-23 is modified to Phosphoserine. Residues Cys-47, His-68, Cys-98, Cys-101, Cys-104, Cys-112, and Cys-175 each contribute to the Zn(2+) site. NAD(+) contacts are provided by residues 200–205 (GLGGVG), Asp-224, Lys-229, Ile-270, 293–295 (VGV), 318–320 (AIF), and Arg-370.

This sequence belongs to the zinc-containing alcohol dehydrogenase family. In terms of assembly, dimer of identical or non-identical chains of class I alcohol dehydrogenase: ADH1A, ADH1B, and ADH1C. Zn(2+) is required as a cofactor. In terms of tissue distribution, expressed in kidney.

It is found in the cytoplasm. It catalyses the reaction a primary alcohol + NAD(+) = an aldehyde + NADH + H(+). It carries out the reaction ethanol + NAD(+) = acetaldehyde + NADH + H(+). In terms of biological role, alcohol dehydrogenase. Exhibits high activity for ethanol oxidation and plays a major role in ethanol catabolism. This chain is Alcohol dehydrogenase 1C (ADH1C), found in Papio hamadryas (Hamadryas baboon).